Consider the following 318-residue polypeptide: tRNA dimethylallyltransferase (318 aa).

Position 9–16 (glycine 9–threonine 16) interacts with ATP. Position 11–16 (threonine 11–threonine 16) interacts with substrate. Interaction with substrate tRNA stretches follow at residues aspartate 34–glutamine 37 and glutamine 158–arginine 162.

It belongs to the IPP transferase family. Monomer. Requires Mg(2+) as cofactor.

It catalyses the reaction adenosine(37) in tRNA + dimethylallyl diphosphate = N(6)-dimethylallyladenosine(37) in tRNA + diphosphate. In terms of biological role, catalyzes the transfer of a dimethylallyl group onto the adenine at position 37 in tRNAs that read codons beginning with uridine, leading to the formation of N6-(dimethylallyl)adenosine (i(6)A). The polypeptide is tRNA dimethylallyltransferase (Dichelobacter nodosus (strain VCS1703A)).